The primary structure comprises 446 residues: Methylenetetrahydrofolate--tRNA-(uracil-5-)-methyltransferase TrmFO (446 aa).

Position 8–13 (8–13 (GGGLAG)) interacts with FAD.

It belongs to the MnmG family. TrmFO subfamily. Requires FAD as cofactor.

The protein resides in the cytoplasm. The catalysed reaction is uridine(54) in tRNA + (6R)-5,10-methylene-5,6,7,8-tetrahydrofolate + NADH + H(+) = 5-methyluridine(54) in tRNA + (6S)-5,6,7,8-tetrahydrofolate + NAD(+). It carries out the reaction uridine(54) in tRNA + (6R)-5,10-methylene-5,6,7,8-tetrahydrofolate + NADPH + H(+) = 5-methyluridine(54) in tRNA + (6S)-5,6,7,8-tetrahydrofolate + NADP(+). Catalyzes the folate-dependent formation of 5-methyl-uridine at position 54 (M-5-U54) in all tRNAs. This chain is Methylenetetrahydrofolate--tRNA-(uracil-5-)-methyltransferase TrmFO, found in Zymomonas mobilis subsp. mobilis (strain ATCC 31821 / ZM4 / CP4).